The following is a 335-amino-acid chain: Rho guanine nucleotide exchange factor 39 (335 aa).

A DH domain is found at 22–197 (KRACTARELL…SETAQRVHTI (176 aa)). Positions 227 to 331 (WFLRQGWLLV…WYHSLTLAIS (105 aa)) constitute a PH domain.

Its subcellular location is the cell membrane. In terms of biological role, promotes cell proliferation. This Bos taurus (Bovine) protein is Rho guanine nucleotide exchange factor 39 (ARHGEF39).